We begin with the raw amino-acid sequence, 527 residues long: Catalase (527 aa).

The segment covering 1-22 (MADNRDPASDQMKHWKEQRAAQ) has biased composition (basic and acidic residues). Residues 1–32 (MADNRDPASDQMKHWKEQRAAQKPDILTTGSG) form a disordered region. N-acetylalanine is present on Ala2. At Ser9 the chain carries Phosphoserine. N6-succinyllysine is present on Lys13. Catalysis depends on residues His75 and Asn148. Residues His194, Ser201, Arg203, and Asn213 each contribute to the NADP(+) site. Lys221 carries the post-translational modification N6-succinyllysine. Lys233 bears the N6-acetyllysine mark. Residues Lys237, Trp303, and His305 each contribute to the NADP(+) site. Residue Tyr358 participates in heme binding. 2 positions are modified to phosphoserine: Ser417 and Ser434. Lys480 is modified (N6-acetyllysine; alternate). Lys480 carries the post-translational modification N6-succinyllysine; alternate. At Lys499 the chain carries N6-acetyllysine. A Phosphothreonine modification is found at Thr511. Position 517 is a phosphoserine (Ser517). The Microbody targeting signal; atypical signature appears at 524 to 527 (KANL).

It belongs to the catalase family. As to quaternary structure, homotetramer. Interacts (via microbody targeting signal) with PEX5, monomeric form interacts with PEX5, leading to its translocation into peroxisomes. Requires heme as cofactor. It depends on NADP(+) as a cofactor.

Its subcellular location is the peroxisome matrix. It carries out the reaction 2 H2O2 = O2 + 2 H2O. Its function is as follows. Catalyzes the degradation of hydrogen peroxide (H(2)O(2)) generated by peroxisomal oxidases to water and oxygen, thereby protecting cells from the toxic effects of hydrogen peroxide. Promotes growth of cells including T-cells, B-cells, myeloid leukemia cells, melanoma cells, mastocytoma cells and normal and transformed fibroblast cells. The polypeptide is Catalase (CAT) (Sus scrofa (Pig)).